Consider the following 161-residue polypeptide: UPF0178 protein PXO_00400 (161 aa).

This sequence belongs to the UPF0178 family.

This Xanthomonas oryzae pv. oryzae (strain PXO99A) protein is UPF0178 protein PXO_00400.